The sequence spans 539 residues: Sphingosine-1-phosphate lyase (539 aa).

The signal sequence occupies residues 1–46; the sequence is MELAMDFALRLRDAANHHLSRYEPLVLLAAPLLALLAARTLHAAAA. At 47–54 the chain is on the lumenal side; that stretch reads AVADRGLR. A helical membrane pass occupies residues 55–75; the sequence is TVLLALAMTAIKLLPGVSAYI. The Cytoplasmic segment spans residues 76 to 539; that stretch reads NAEKRKVVDQ…LLVEFMDASC (464 aa). At Lys-344 the chain carries N6-(pyridoxal phosphate)lysine.

This sequence belongs to the group II decarboxylase family. Sphingosine-1-phosphate lyase subfamily. The cofactor is pyridoxal 5'-phosphate.

It is found in the endoplasmic reticulum membrane. The catalysed reaction is sphinganine 1-phosphate = hexadecanal + phosphoethanolamine. The protein operates within lipid metabolism; sphingolipid metabolism. Its function is as follows. Cleaves phosphorylated sphingoid bases (PSBs), such as sphingosine-1-phosphate, into fatty aldehydes and phosphoethanolamine. Elevates stress-induced ceramide production and apoptosis. The chain is Sphingosine-1-phosphate lyase (SPL) from Oryza sativa subsp. japonica (Rice).